Consider the following 221-residue polypeptide: MSYGRPPPDVEGMTSLKVDNLTYRTSPDTLRRVFEKYGRVGDVYIPRDRYTKESRGFAFVRFHDKRDAEDAMDAMDGAVLDGRELRVQMARYGRPPDSHHSRRGPPPRRYGGGGYGRRSRSPRRRRRSRSRSRSRSRSRSRSRYSRSKSRSRTRSRSRSTSKSRSARRSKSKSSSVSRSRSRSRSRSRSRSPPPVSKREPKSRSRSKSPPESPEEEGAVSS.

Ser2 is modified (N-acetylserine). Ser2 carries the phosphoserine modification. One can recognise an RRM domain in the interval 14–92; that stretch reads TSLKVDNLTY…RELRVQMARY (79 aa). Phosphothreonine is present on residues Thr22 and Thr25. Phosphoserine is present on Ser26. Lys52 carries the post-translational modification N6-acetyllysine. The disordered stretch occupies residues 92-221; the sequence is YGRPPDSHHS…SPEEEGAVSS (130 aa). 2 stretches are compositionally biased toward basic residues: residues 117–171 and 179–189; these read RRSR…RSKS and SRSRSRSRSRS. Residues Ser189, Ser191, Ser204, Ser206, Ser208, Ser212, and Ser220 each carry the phosphoserine modification. Residues 212 to 221 show a composition bias toward acidic residues; sequence SPEEEGAVSS.

The protein belongs to the splicing factor SR family. As to quaternary structure, in vitro, self-associates and binds SRSF1/SFRS1 (ASF/SF2), SNRP70 and U2AF1 but not U2AF2. Binds SREK1/SFRS12. Interacts with CCNL1 and CCNL2. Interacts with SCAF11. Interacts with ZRSR2/U2AF1-RS2. Interacts with CCDC55 (via C-terminus). Interacts with BRDT. Extensively phosphorylated on serine residues in the RS domain. Phosphorylated by SRPK2 and this causes its redistribution from the nuclear speckle to nucleoplasm and controls cell fate decision in response to cisplatin treatment. KAT5/TIP60 inhibits its phosphorylation by preventing SRPK2 nuclear translocation. Post-translationally, acetylation on Lys-52 by KAT5/TIP60 promotes its proteasomal degradation. This effect is counterbalanced by HDAC6, which positively controls SRSF2 protein level by deacetylating it and preventing its proteasomal degradation.

Its subcellular location is the nucleus. It localises to the nucleoplasm. The protein localises to the nucleus speckle. Its function is as follows. Necessary for the splicing of pre-mRNA. It is required for formation of the earliest ATP-dependent splicing complex and interacts with spliceosomal components bound to both the 5'- and 3'-splice sites during spliceosome assembly. It also is required for ATP-dependent interactions of both U1 and U2 snRNPs with pre-mRNA. Interacts with other spliceosomal components, via the RS domains, to form a bridge between the 5'- and 3'-splice site binding components, U1 snRNP and U2AF. Binds to purine-rich RNA sequences, either 5'-AGSAGAGTA-3' (S=C or G) or 5'-GTTCGAGTA-3'. Can bind to beta-globin mRNA and commit it to the splicing pathway. The phosphorylated form (by SRPK2) is required for cellular apoptosis in response to cisplatin treatment. This Pan troglodytes (Chimpanzee) protein is Serine/arginine-rich splicing factor 2 (SRSF2).